Reading from the N-terminus, the 64-residue chain is Fatty acid synthase (64 aa).

The region spanning 1–64 is the Carrier domain; the sequence is AEGEGQRDLL…VLSMREVRQL (64 aa). An O-(pantetheine 4'-phosphoryl)serine; alternate modification is found at Ser-38. Ser-38 carries the post-translational modification Phosphoserine; alternate.

In terms of assembly, homodimer which is arranged in a head to tail fashion. Interacts with CEACAM1; this interaction is insulin and phosphorylation-dependent; reduces fatty-acid synthase activity.

Its subcellular location is the cytoplasm. The protein localises to the melanosome. The catalysed reaction is acetyl-CoA + n malonyl-CoA + 2n NADPH + 2n H(+) = a long-chain fatty acid + (n+1) CoA + n CO2 + 2n NADP(+).. Its function is as follows. Fatty acid synthetase catalyzes the formation of long-chain fatty acids from acetyl-CoA, malonyl-CoA and NADPH. This multifunctional protein has 7 catalytic activities as an acyl carrier protein. The protein is Fatty acid synthase (FASN) of Oryctolagus cuniculus (Rabbit).